The sequence spans 286 residues: Pyridoxine 4-dehydrogenase (286 aa).

The active-site Proton donor is the Y59. 210–218 (FPLGGFTPL) contacts NADP(+).

The protein belongs to the aldo/keto reductase family. Aldo/keto reductase 2 subfamily.

The catalysed reaction is pyridoxine + NADP(+) = pyridoxal + NADPH + H(+). It catalyses the reaction pyridoxine + NAD(+) = pyridoxal + NADH + H(+). Functionally, catalyzes the NAD(P)H-dependent reduction of pyridoxal to pyridoxine in vitro. Is not able to reduce 4-pyridoxate, and to oxidize pyridoxine or pyridoxamine. Has Kemp eliminase activity towards the non-physiological substrate 5-nitrobenzisoxazole, producing 4-nitro-2-cyanophenol; this activity is not considered to be physiologically relevant. This Escherichia coli (strain K12) protein is Pyridoxine 4-dehydrogenase.